Here is a 444-residue protein sequence, read N- to C-terminus: Aflatoxin biosynthesis regulatory protein (444 aa).

The interval 1-26 (MVDHISPRASPGPIRSSQTRRARKLR) is disordered. Residues 29–56 (CTSCASSKVRCTKEKPACARCIERGLAC) constitute a DNA-binding region (zn(2)-C6 fungal-type). The tract at residues 64 to 167 (MGRNPRAPSP…QGLGGDLAGQ (104 aa)) is disordered. A compositionally biased stretch (basic residues) spans 106–116 (TQAHTHAHSHP). Low complexity predominate over residues 120-130 (PQSHPQSNQPP). Over residues 136–149 (PNGSSSVSAIFSHQ) the composition is skewed to polar residues.

It is found in the nucleus. Its pathway is mycotoxin biosynthesis; aflatoxin biosynthesis. Functionally, involved in the regulation of aflatoxin biosynthesis. May have a role in nitrate assimilation and sclerotial morphogenesis. In Aspergillus parasiticus, this protein is Aflatoxin biosynthesis regulatory protein (aflR).